The sequence spans 93 residues: Putative pterin-4-alpha-carbinolamine dehydratase (93 aa).

The protein belongs to the pterin-4-alpha-carbinolamine dehydratase family.

The catalysed reaction is (4aS,6R)-4a-hydroxy-L-erythro-5,6,7,8-tetrahydrobiopterin = (6R)-L-erythro-6,7-dihydrobiopterin + H2O. The sequence is that of Putative pterin-4-alpha-carbinolamine dehydratase from Nostoc sp. (strain PCC 7120 / SAG 25.82 / UTEX 2576).